Consider the following 362-residue polypeptide: tRNA-specific 2-thiouridylase MnmA (362 aa).

Residues 8-15 and Met-35 each bind ATP; that span reads AMSGGVDS. The tract at residues 95–97 is interaction with target base in tRNA; it reads NPD. Cys-100 acts as the Nucleophile in catalysis. Cys-100 and Cys-196 are oxidised to a cystine. Gly-124 is an ATP binding site. The tract at residues 146 to 148 is interaction with tRNA; the sequence is KDQ. The Cysteine persulfide intermediate role is filled by Cys-196. Residues 303–304 are interaction with tRNA; it reads RY.

The protein belongs to the MnmA/TRMU family.

It is found in the cytoplasm. The enzyme catalyses S-sulfanyl-L-cysteinyl-[protein] + uridine(34) in tRNA + AH2 + ATP = 2-thiouridine(34) in tRNA + L-cysteinyl-[protein] + A + AMP + diphosphate + H(+). In terms of biological role, catalyzes the 2-thiolation of uridine at the wobble position (U34) of tRNA, leading to the formation of s(2)U34. The protein is tRNA-specific 2-thiouridylase MnmA of Chlamydia abortus (strain DSM 27085 / S26/3) (Chlamydophila abortus).